The chain runs to 96 residues: Plasminogen-like protein A (96 aa).

A signal peptide spans 1 to 19 (MEHKEVVLLLLLFLKSGQG). A PAN domain is found at 20–96 (EPLDDYVNAQ…RMRDVVLFEK (77 aa)). Cystine bridges form between cysteine 49-cysteine 73 and cysteine 53-cysteine 61.

As to expression, expressed in liver.

The protein resides in the secreted. May bind non-covalently to lysine binding sites present in the kringle structures of plasminogen. This may interfere with the binding of fibrin or alpha-2-antiplasmin to plasminogen and may result in the localization of activity at sites necessary for extracellular matrix destruction. This chain is Plasminogen-like protein A (PLGLA), found in Homo sapiens (Human).